The sequence spans 254 residues: N(G),N(G)-dimethylarginine dimethylaminohydrolase (254 aa).

Residues Leu18, Asp60, 65–66 (ED), Arg85, and Arg132 each bind substrate. Catalysis depends on His162, which acts as the Proton donor. His162 lines the Zn(2+) pocket. Residue Ile243 coordinates substrate. A Zn(2+)-binding site is contributed by Cys249. Cys249 (nucleophile) is an active-site residue.

The protein belongs to the DDAH family. In terms of assembly, homodimer.

The enzyme catalyses N(omega),N(omega)-dimethyl-L-arginine + H2O = dimethylamine + L-citrulline. The catalysed reaction is N(omega)-methyl-L-arginine + H2O = L-citrulline + methylamine. Inhibited by zinc ions. Competitively inhibited by lysine. Functionally, hydrolyzes N(G),N(G)-dimethyl-L-arginine (ADMA) and N(G)-monomethyl-L-arginine (MMA). This Pseudomonas aeruginosa (strain ATCC 15692 / DSM 22644 / CIP 104116 / JCM 14847 / LMG 12228 / 1C / PRS 101 / PAO1) protein is N(G),N(G)-dimethylarginine dimethylaminohydrolase.